A 186-amino-acid chain; its full sequence is Probable GTP-binding protein EngB (186 aa).

Residues 18 to 186 (SKKEVCLIGR…LMLKIIDVIS (169 aa)) enclose the EngB-type G domain. GTP is bound by residues 26-33 (GRSNVGKS), 52-56 (GRTVT), 69-72 (DLPG), 135-138 (NKID), and 166-168 (ISA). The Mg(2+) site is built by S33 and T54.

Belongs to the TRAFAC class TrmE-Era-EngA-EngB-Septin-like GTPase superfamily. EngB GTPase family. Requires Mg(2+) as cofactor.

Necessary for normal cell division and for the maintenance of normal septation. The polypeptide is Probable GTP-binding protein EngB (Mycoplasmoides gallisepticum (strain R(low / passage 15 / clone 2)) (Mycoplasma gallisepticum)).